A 233-amino-acid chain; its full sequence is Large ribosomal subunit protein uL1 (233 aa).

Belongs to the universal ribosomal protein uL1 family. As to quaternary structure, part of the 50S ribosomal subunit.

Binds directly to 23S rRNA. The L1 stalk is quite mobile in the ribosome, and is involved in E site tRNA release. In terms of biological role, protein L1 is also a translational repressor protein, it controls the translation of the L11 operon by binding to its mRNA. The chain is Large ribosomal subunit protein uL1 from Shewanella loihica (strain ATCC BAA-1088 / PV-4).